A 228-amino-acid polypeptide reads, in one-letter code: MPKLILCRHGQSEWNAKNLFTGWADVKLSKQGIEEAQSAGKKIYDNQIEIDIAFTSLLTRALETTQYILAGSDQQWIPVYKSWRLNERHYGGLQGLNKDDARKKWGEDQVHQWRRSYDVRPPRESEEQREAYLKNRRYQHIDHRMMPYCESLKDTLERVVPFWTDHISQHLLDDKTVLVSAHGNSIRALIKYLEGLSEEDIVGYEIKTGAPLVYELTDDLVVKDKYYL.

Residues 8-15 (RHGQSEWN), 21-22 (TG), Arg60, 87-90 (ERHY), Lys98, 114-115 (RR), and 183-184 (GN) contribute to the substrate site. The active-site Tele-phosphohistidine intermediate is the His9. Glu87 acts as the Proton donor/acceptor in catalysis.

It belongs to the phosphoglycerate mutase family. BPG-dependent PGAM subfamily.

It catalyses the reaction (2R)-2-phosphoglycerate = (2R)-3-phosphoglycerate. Its pathway is carbohydrate degradation; glycolysis; pyruvate from D-glyceraldehyde 3-phosphate: step 3/5. In terms of biological role, catalyzes the interconversion of 2-phosphoglycerate and 3-phosphoglycerate. The sequence is that of 2,3-bisphosphoglycerate-dependent phosphoglycerate mutase from Staphylococcus epidermidis (strain ATCC 12228 / FDA PCI 1200).